The chain runs to 65 residues: Defensin-B3 (65 aa).

An N-terminal signal peptide occupies residues 1–21 (MRLLLVFFFLSLLDQAPPARS). 3 disulfides stabilise this stretch: C29-C58, C36-C50, and C40-C59. The propeptide occupies 62-65 (ESPR).

This sequence belongs to the beta-defensin family. Lowly expressed in spleen, and expressed at lower levels in kidney, lung and testis.

It localises to the secreted. Its function is as follows. Has antimicrobial activity. This is Defensin-B3 from Ornithorhynchus anatinus (Duckbill platypus).